The following is a 715-amino-acid chain: Polyribonucleotide nucleotidyltransferase (715 aa).

Asp-488 and Asp-494 together coordinate Mg(2+). The region spanning 555–614 (PKIETIKIPVDKIREVIGSGGKVIREIVEKTGAKIDIGEDGTIKIAAAEQTKIDAAKEWI) is the KH domain. Positions 624–692 (GQIYTGKVVK…DRGKTRLSMK (69 aa)) constitute an S1 motif domain. The interval 692–715 (KVVDQETGEDLSKSNEKAEEPADA) is disordered. Basic and acidic residues predominate over residues 701-715 (DLSKSNEKAEEPADA).

This sequence belongs to the polyribonucleotide nucleotidyltransferase family. The cofactor is Mg(2+).

Its subcellular location is the cytoplasm. The catalysed reaction is RNA(n+1) + phosphate = RNA(n) + a ribonucleoside 5'-diphosphate. Functionally, involved in mRNA degradation. Catalyzes the phosphorolysis of single-stranded polyribonucleotides processively in the 3'- to 5'-direction. In Phenylobacterium zucineum (strain HLK1), this protein is Polyribonucleotide nucleotidyltransferase.